The chain runs to 135 residues: Putative pre-16S rRNA nuclease (135 aa).

This sequence belongs to the YqgF nuclease family.

Its subcellular location is the cytoplasm. Could be a nuclease involved in processing of the 5'-end of pre-16S rRNA. In Clostridium acetobutylicum (strain ATCC 824 / DSM 792 / JCM 1419 / IAM 19013 / LMG 5710 / NBRC 13948 / NRRL B-527 / VKM B-1787 / 2291 / W), this protein is Putative pre-16S rRNA nuclease.